The following is a 206-amino-acid chain: Small ribosomal subunit protein uS4 (206 aa).

In terms of domain architecture, S4 RNA-binding spans 96 to 156; the sequence is GRLDNVVYRM…EKAKKQSRVK (61 aa).

It belongs to the universal ribosomal protein uS4 family. As to quaternary structure, part of the 30S ribosomal subunit. Contacts protein S5. The interaction surface between S4 and S5 is involved in control of translational fidelity.

Functionally, one of the primary rRNA binding proteins, it binds directly to 16S rRNA where it nucleates assembly of the body of the 30S subunit. In terms of biological role, with S5 and S12 plays an important role in translational accuracy. The protein is Small ribosomal subunit protein uS4 of Yersinia enterocolitica serotype O:8 / biotype 1B (strain NCTC 13174 / 8081).